Here is a 1189-residue protein sequence, read N- to C-terminus: Phosphatidylinositol 3,4,5-trisphosphate 5-phosphatase 1 (1189 aa).

One can recognise an SH2 domain in the interval 5–101; the sequence is WNHGNITRSK…GLVTHLQYPV (97 aa). The segment covering 103-117 has biased composition (acidic residues); it reads LEEEDTGDDPEEDTV. The disordered stretch occupies residues 103–132; it reads LEEEDTGDDPEEDTVESVVSPPELPPRNIP. The SH3-binding 1 motif lies at 124–129; it reads PELPPR. S243 carries the phosphoserine modification. Residues 870–906 form a disordered region; it reads TERDESSGPKTLKSLTSHDPMKQWEVTSRAPPCSGSS. The NPXY motif 1 signature appears at 912–915; sequence NPNY. Y915 bears the Phosphotyrosine mark. Residues 922 to 1189 are disordered; that stretch reads GPPMPLHVKQ…PGPLGRTAMQ (268 aa). Residues 931–943 show a composition bias toward polar residues; sequence QTLSPDQQPTAWS. S934 carries the post-translational modification Phosphoserine. Phosphotyrosine is present on Y944. Residue S960 is modified to Phosphoserine. The span at 961-971 shows a compositional bias: pro residues; it reads PPTPPGQPPIS. T963 carries the post-translational modification Phosphothreonine. The SH3-binding 2 signature appears at 969–974; the sequence is PISPKK. A Phosphoserine modification is found at S971. The tract at residues 1016–1030 is interaction with DAB2; it reads MFENPLYGSLSSFPK. The short motif at 1019-1022 is the NPXY motif 2 element; the sequence is NPLY. At Y1022 the chain carries Phosphotyrosine. Residues 1033–1047 show a composition bias toward basic and acidic residues; it reads PRKDQESPKMPRKEP. An SH3-binding 3 motif is present at residues 1040–1051; it reads PKMPRKEPPPCP. A compositionally biased stretch (pro residues) spans 1134-1145; sequence PPTPTPRPPLPV. Over residues 1157 to 1177 the composition is skewed to basic and acidic residues; that stretch reads KGRDYRDNTELPHHGKHRPEE.

It belongs to the inositol 1,4,5-trisphosphate 5-phosphatase family. In terms of assembly, interacts with tyrosine phosphorylated form of SHC1. Interacts with tyrosine phosphorylated form of DOK1. Interacts with tyrosine phosphorylated form of DOK3. Interacts with tyrosine phosphorylated form of SLAMF1/CD150. Interacts with PTPN11 in response to IL-3. Interacts with receptor EPOR. Interacts with receptors MS4A2/FCER1B and FCER1G. Interacts with receptors FCGR2B and FCGR3. Interacts with receptor FCGR2A, leading to regulate gene expression during the phagocytic process. Interacts with GRB2. Interacts with PLCG1. Interacts with tyrosine kinases SRC and TEC. Interacts with c-Met/MET. Interacts with MILR1 (tyrosine-phosphorylated). Can weakly interact (via NPXY motif 2) with DAB2 (via PID domain); the interaction is impaired by tyrosine phosphorylation of the NPXY motif. Interacts with FCRL3 and FCRL6 (tyrosine phosphorylated form). Interacts (via SH2 domain) with tyrosine phosphorylated KLRC1 (via ITIM). Interacts with MPL/TPOR. Post-translationally, tyrosine phosphorylated by the members of the SRC family after exposure to a diverse array of extracellular stimuli such as cytokines, growth factors, antibodies, chemokines, integrin ligands and hypertonic and oxidative stress. Phosphorylated upon IgG receptor FCGR2B-binding. Specifically expressed in immune and hematopoietic cells. Expressed in bone marrow and blood cells. Levels vary considerably within this compartment. Present in at least 74% of immature CD34+ cells, whereas within the more mature population of CD33+ cells, it is present in only 10% of cells. Present in the majority of T-cells, while it is present in a minority of B-cells (at protein level).

It localises to the cytoplasm. The protein resides in the cell membrane. The protein localises to the membrane raft. Its subcellular location is the cytoskeleton. It is found in the membrane. It catalyses the reaction a 1,2-diacyl-sn-glycero-3-phospho-(1D-myo-inositol-3,4,5-trisphosphate) + H2O = a 1,2-diacyl-sn-glycero-3-phospho-(1D-myo-inositol-3,4-bisphosphate) + phosphate. It carries out the reaction 1D-myo-inositol 1,3,4,5-tetrakisphosphate + H2O = 1D-myo-inositol 1,3,4-trisphosphate + phosphate. The catalysed reaction is a 1,2-diacyl-sn-glycero-3-phospho-(1D-myo-inositol-4,5-bisphosphate) + H2O = a 1,2-diacyl-sn-glycero-3-phospho-(1D-myo-inositol 4-phosphate) + phosphate. Activated upon translocation to the sites of synthesis of PtdIns(3,4,5)P3 in the membrane. Phosphatidylinositol (PtdIns) phosphatase that specifically hydrolyzes the 5-phosphate of phosphatidylinositol-3,4,5-trisphosphate (PtdIns(3,4,5)P3) to produce PtdIns(3,4)P2, thereby negatively regulating the PI3K (phosphoinositide 3-kinase) pathways. Able also to hydrolyzes the 5-phosphate of phosphatidylinositol-4,5-bisphosphate (PtdIns(4,5)P3) and inositol 1,3,4,5-tetrakisphosphate. Acts as a negative regulator of B-cell antigen receptor signaling. Mediates signaling from the FC-gamma-RIIB receptor (FCGR2B), playing a central role in terminating signal transduction from activating immune/hematopoietic cell receptor systems. Acts as a negative regulator of myeloid cell proliferation/survival and chemotaxis, mast cell degranulation, immune cells homeostasis, integrin alpha-IIb/beta-3 signaling in platelets and JNK signaling in B-cells. Regulates proliferation of osteoclast precursors, macrophage programming, phagocytosis and activation and is required for endotoxin tolerance. Involved in the control of cell-cell junctions, CD32a signaling in neutrophils and modulation of EGF-induced phospholipase C activity. Key regulator of neutrophil migration, by governing the formation of the leading edge and polarization required for chemotaxis. Modulates FCGR3/CD16-mediated cytotoxicity in NK cells. Mediates the activin/TGF-beta-induced apoptosis through its Smad-dependent expression. The sequence is that of Phosphatidylinositol 3,4,5-trisphosphate 5-phosphatase 1 (INPP5D) from Homo sapiens (Human).